The chain runs to 1184 residues: DNA polymerase III subunit alpha (1184 aa).

This sequence belongs to the DNA polymerase type-C family. DnaE subfamily. As to quaternary structure, the Pol III holoenzyme complex contains at least 10 different subunits organized into 3 functionally essential subassemblies: the Pol III core, the beta sliding clamp processivity factor and the clamp-loading complex. The Pol III core (subunits alpha, epsilon and theta) contains the polymerase and the 3'-5' exonuclease proofreading activities. The polymerase is tethered to the template via the dimeric beta sliding clamp processivity factor. The clamp loader (also called gamma complex) assembles the beta sliding clamp onto the primed template and plays a central role in the organization and communication at the replication fork. The clamp-loading complex contains delta, delta', psi and chi, and 3 copies of either or both of two different DnaX proteins, gamma and tau. The DNA replisome complex has a single clamp loader (3 tau and 1 each of delta, delta', psi and chi subunits) which binds 3 Pol III cores (1 core on the leading strand and 2 on the lagging strand) each with a beta sliding clamp dimer. Interacts with the beta-sliding clamp (DnaN). Co-immunoprecipitates with DarG in the presence and absence of darT.

The protein localises to the cytoplasm. It carries out the reaction DNA(n) + a 2'-deoxyribonucleoside 5'-triphosphate = DNA(n+1) + diphosphate. In terms of biological role, DNA polymerase III is a complex, multichain enzyme responsible for most of the replicative synthesis in bacteria. Pol III also exhibits 3' to 5' exonuclease activity. The alpha chain is the DNA polymerase. The polypeptide is DNA polymerase III subunit alpha (dnaE1) (Mycobacterium tuberculosis (strain ATCC 25618 / H37Rv)).